We begin with the raw amino-acid sequence, 74 residues long: Putative Fe(2+) transport protein A (74 aa).

Belongs to the FeoA family.

Might be involved in Fe(2+) ion uptake. This chain is Putative Fe(2+) transport protein A, found in Campylobacter jejuni subsp. jejuni serotype O:2 (strain ATCC 700819 / NCTC 11168).